A 234-amino-acid chain; its full sequence is Urease accessory protein UreG 1 (234 aa).

Residues 1–29 (MTRTPTGVPMHLGHTHDAPAAVSADATRP) form a disordered region. Position 42–49 (42–49 (GPVGSGKT)) interacts with GTP.

The protein belongs to the SIMIBI class G3E GTPase family. UreG subfamily. In terms of assembly, homodimer. UreD, UreF and UreG form a complex that acts as a GTP-hydrolysis-dependent molecular chaperone, activating the urease apoprotein by helping to assemble the nickel containing metallocenter of UreC. The UreE protein probably delivers the nickel.

Its subcellular location is the cytoplasm. Functionally, facilitates the functional incorporation of the urease nickel metallocenter. This process requires GTP hydrolysis, probably effectuated by UreG. This Streptomyces griseus subsp. griseus (strain JCM 4626 / CBS 651.72 / NBRC 13350 / KCC S-0626 / ISP 5235) protein is Urease accessory protein UreG 1.